We begin with the raw amino-acid sequence, 1141 residues long: Serine-aspartate repeat-containing protein E (1141 aa).

An N-terminal signal peptide occupies residues 1–52 (MINRDNKKAITKKGMISNRLNKFSIRKYTVGTASILVGTTLIFGLGNQEAKA). The YSIRK-G/S signaling motif signature appears at 23-34 (FSIRKYTVGTAS). The ligand binding A region stretch occupies residues 53–601 (AENTSTENAK…GDGTVKPEEK (549 aa)). The tract at residues 54–248 (ENTSTENAKQ…RSTKPVATAP (195 aa)) is disordered. Over residues 61 to 75 (AKQDDATTSDNKEVV) the composition is skewed to basic and acidic residues. Residues 77–90 (ETENNSTTENDSTN) are compositionally biased toward low complexity. The span at 92–108 (IKKETNTDSQPEAKEES) shows a compositional bias: basic and acidic residues. Low complexity predominate over residues 109-126 (TTSSTQQQQNNVTATTET). Basic and acidic residues predominate over residues 130 to 145 (NIEKENVKPSTDKTAT). The span at 159-207 (NYTNNDVTTKPSTSEIQTKPTTPQESTNIENSQPQPTPSKVDNQVTDAT) shows a compositional bias: polar residues. The segment covering 216–241 (SKEELKNNPEKLKELVRNDNNTDRST) has biased composition (basic and acidic residues). CNA-B domains lie at 602–714 (LYKI…YKEP), 715–824 (KYNL…YKTP), and 825–935 (KYSL…EEDT). Residues 929-1117 (GYFEEDTSDS…GSENNGSNNA (189 aa)) are disordered. The span at 930–1080 (YFEEDTSDSD…DSDSDSDSDS (151 aa)) shows a compositional bias: acidic residues. An LPXTG sorting signal motif is present at residues 1104 to 1108 (LPETG). T1107 bears the Pentaglycyl murein peptidoglycan amidated threonine mark. Positions 1108–1141 (GSENNGSNNATLFGGLFAALGSLLLFGRRKKQNK) are cleaved as a propeptide — removed by sortase.

The protein belongs to the serine-aspartate repeat-containing protein (SDr) family. As to quaternary structure, interacts with host complement factor H/CFAH (via C-terminus). Interacts with host complement regulator C4BPA.

It is found in the secreted. Its subcellular location is the cell wall. Its function is as follows. Cell surface-associated calcium-binding protein which plays an important role in adhesion and pathogenesis. Contributes to the resistance to killing by innate immune components in blood and thus attenuates bacterial clearance by interacting with host complement factor H/CFAH and modulating its activity. Inhibits also bacterial opsonization and killing by interacting with host complement regulator C4BPA and thus inhibiting classical complement pathway activation. The protein is Serine-aspartate repeat-containing protein E (sdrE) of Staphylococcus aureus (strain Mu50 / ATCC 700699).